The following is an 804-amino-acid chain: Phenylalanine--tRNA ligase beta subunit (804 aa).

In terms of domain architecture, tRNA-binding spans R38–A148. The 76-residue stretch at P401–P476 folds into the B5 domain. Mg(2+) is bound by residues D454, D460, E463, and E464. Positions S710–R803 constitute an FDX-ACB domain.

This sequence belongs to the phenylalanyl-tRNA synthetase beta subunit family. Type 1 subfamily. Tetramer of two alpha and two beta subunits. The cofactor is Mg(2+).

The protein resides in the cytoplasm. It catalyses the reaction tRNA(Phe) + L-phenylalanine + ATP = L-phenylalanyl-tRNA(Phe) + AMP + diphosphate + H(+). The sequence is that of Phenylalanine--tRNA ligase beta subunit from Bartonella henselae (strain ATCC 49882 / DSM 28221 / CCUG 30454 / Houston 1) (Rochalimaea henselae).